Here is a 258-residue protein sequence, read N- to C-terminus: Granzyme K (258 aa).

An N-terminal signal peptide occupies residues 1-23 (MSFSSSALVFLVAGIYMSSESFH). A propeptide spans 24–25 (TE) (activation peptide). Positions 26–253 (IIGGREVQPH…YQTWIKSKLA (228 aa)) constitute a Peptidase S1 domain. C51 and C67 are joined by a disulfide. Active-site charge relay system residues include H66 and D110. 3 disulfide bridges follow: C143–C214, C175–C193, and C204–C228. S208 functions as the Charge relay system in the catalytic mechanism.

Belongs to the peptidase S1 family. Granzyme subfamily. Speen, lungs and liver non-parenchymal cells.

It is found in the cytoplasmic granule. The protein is Granzyme K (Gzmk) of Rattus norvegicus (Rat).